The sequence spans 421 residues: MTESVLDYMTRLGRAAREASRVLARASTAQKNRALQAAAAALDAARDELVRANELDLAGGRANGLDAAMLDRLALTPKVIDGMIEGLRQVATLPDPIGAIRDMRYMPSGIQVGKMRVPLGVVGIIYESRPNVTIDAASLCLKSGNATILRGGSEAIHSNQAIARCIQLGLAEAGLPAAAVQVVDTTDRAAVGALISMPDYVDVIVPRGGKGLIERISRDARVPVIKHLDGICHVYVDLAADVDKAIRIADNAKTQRFAPCNTMETLLVHQGIAEQVLPPLAAIYRDKGVELRGCPRTRALLGNEVLAASEEDWSTEYNAPILSIRMLDSLDEAIEHINRYGSQHTDAIVTENFTDARRFLTEVDSASVMINASTRFADGFEYGLGAEIGISTDKLHARGPVGLEGLTSEKYVVFGDGHVRT.

Belongs to the gamma-glutamyl phosphate reductase family.

It localises to the cytoplasm. It catalyses the reaction L-glutamate 5-semialdehyde + phosphate + NADP(+) = L-glutamyl 5-phosphate + NADPH + H(+). It functions in the pathway amino-acid biosynthesis; L-proline biosynthesis; L-glutamate 5-semialdehyde from L-glutamate: step 2/2. Functionally, catalyzes the NADPH-dependent reduction of L-glutamate 5-phosphate into L-glutamate 5-semialdehyde and phosphate. The product spontaneously undergoes cyclization to form 1-pyrroline-5-carboxylate. This Stutzerimonas stutzeri (strain A1501) (Pseudomonas stutzeri) protein is Gamma-glutamyl phosphate reductase.